The following is a 215-amino-acid chain: Pyrophosphatase PpaX (215 aa).

Catalysis depends on aspartate 9, which acts as the Nucleophile.

It belongs to the HAD-like hydrolase superfamily. PpaX family. The cofactor is Mg(2+).

The catalysed reaction is diphosphate + H2O = 2 phosphate + H(+). Its function is as follows. Hydrolyzes pyrophosphate formed during P-Ser-HPr dephosphorylation by HPrK/P. Might play a role in controlling the intracellular pyrophosphate pool. The polypeptide is Pyrophosphatase PpaX (Bacillus mycoides (strain KBAB4) (Bacillus weihenstephanensis)).